A 201-amino-acid polypeptide reads, in one-letter code: Dephospho-CoA kinase (201 aa).

Residues 4 to 201 (TIGLTGGIAS…ILKQWDALEK (198 aa)) form the DPCK domain. ATP is bound at residue 12 to 17 (ASGKST).

This sequence belongs to the CoaE family.

It localises to the cytoplasm. The catalysed reaction is 3'-dephospho-CoA + ATP = ADP + CoA + H(+). Its pathway is cofactor biosynthesis; coenzyme A biosynthesis; CoA from (R)-pantothenate: step 5/5. In terms of biological role, catalyzes the phosphorylation of the 3'-hydroxyl group of dephosphocoenzyme A to form coenzyme A. In Geobacillus kaustophilus (strain HTA426), this protein is Dephospho-CoA kinase.